Consider the following 728-residue polypeptide: Histone demethylase JHD2 (728 aa).

Positions 4–47 (IPALYPTEQEFKNPIDYLSNPHIKRLGVRYGMVKVVPPNGFCPP) constitute a JmjN domain. The segment at 235–285 (DDACIVCRKTNDPKRTILCDSCDKPFHIYCLSPPLERVPSGDWICNTCIVG) adopts a PHD-type zinc-finger fold. Positions 381 to 549 (KYCDHPMNLT…YGFGAITDYK (169 aa)) constitute a JmjC domain. Positions 427, 430, and 517 each coordinate Fe cation.

The protein belongs to the JARID1 histone demethylase family. The cofactor is Fe(2+).

The protein localises to the nucleus. The enzyme catalyses N(6),N(6),N(6)-trimethyl-L-lysyl(4)-[histone H3] + 3 2-oxoglutarate + 3 O2 = L-lysyl(4)-[histone H3] + 3 formaldehyde + 3 succinate + 3 CO2. Its function is as follows. Histone demethylase that demethylates 'Lys-4' of histone H3, thereby playing a central role in histone code. Demethylates trimethylated H3 'Lys-4'. The chain is Histone demethylase JHD2 (JHD2) from Saccharomyces cerevisiae (strain ATCC 204508 / S288c) (Baker's yeast).